We begin with the raw amino-acid sequence, 147 residues long: MTSFKLVKYIPRIKKKKSGLRKLARKVPTDRLLKFERIFKAQKRINMSVFKAQRVLDEIRWRYYEETVMILNLMPYRASYPILKLVYSASANATHYRNFDKANLFITKAEVSRSTIMKKFRPRARGRSFPIKKNMCHITIILNIVKK.

The protein belongs to the universal ribosomal protein uL22 family. In terms of assembly, part of the 50S ribosomal subunit.

It localises to the plastid. It is found in the chloroplast. In terms of biological role, this protein binds specifically to 23S rRNA. Functionally, the globular domain of the protein is located near the polypeptide exit tunnel on the outside of the subunit, while an extended beta-hairpin is found that lines the wall of the exit tunnel in the center of the 70S ribosome. The polypeptide is Large ribosomal subunit protein uL22c (rpl22) (Lolium perenne (Perennial ryegrass)).